We begin with the raw amino-acid sequence, 66 residues long: Large ribosomal subunit protein bL33c (66 aa).

The protein belongs to the bacterial ribosomal protein bL33 family.

Its subcellular location is the plastid. It is found in the chloroplast. The polypeptide is Large ribosomal subunit protein bL33c (Aethionema cordifolium (Lebanon stonecress)).